Here is a 72-residue protein sequence, read N- to C-terminus: MTKEDSFEMHGTVLDTLPNTMFRVKLENGHVIVAHISGKIRKNYIRILTGDKVTVELTPYDLSKGRIIFRSR.

Residues 1 to 72 (MTKEDSFEMH…SKGRIIFRSR (72 aa)) enclose the S1-like domain.

It belongs to the IF-1 family. As to quaternary structure, component of the 30S ribosomal translation pre-initiation complex which assembles on the 30S ribosome in the order IF-2 and IF-3, IF-1 and N-formylmethionyl-tRNA(fMet); mRNA recruitment can occur at any time during PIC assembly.

The protein localises to the cytoplasm. In terms of biological role, one of the essential components for the initiation of protein synthesis. Stabilizes the binding of IF-2 and IF-3 on the 30S subunit to which N-formylmethionyl-tRNA(fMet) subsequently binds. Helps modulate mRNA selection, yielding the 30S pre-initiation complex (PIC). Upon addition of the 50S ribosomal subunit IF-1, IF-2 and IF-3 are released leaving the mature 70S translation initiation complex. This Blochmanniella pennsylvanica (strain BPEN) protein is Translation initiation factor IF-1.